A 717-amino-acid chain; its full sequence is Transport/processing ATP-binding protein ComA (717 aa).

Residues 11 to 138 (QVDQMDCGVA…EEWTGVTLFM (128 aa)) form the Peptidase C39 domain. C17 is an active-site residue. The next 6 membrane-spanning stretches (helical) occupy residues 166-186 (GLIANIVLATLLVTVINIVGS), 205-225 (LGIISIGLVIVYIFQQILSYA), 237-257 (LSIDVILSYIKHVFHLPMSFF), 282-302 (TILSIFLDVSTVVIISLVLFS), 306-326 (NLFFMTLLALPIYTVIIFAFM), and 397-417 (VAHLLLNVGILWMGAVLVMDG). An ABC transmembrane type-1 domain is found at 168–450 (IANIVLATLL…IINLQTKLQT (283 aa)). The 234-residue stretch at 484–717 (MTFKQVHYKY…GGFYAHLVNS (234 aa)) folds into the ABC transporter domain. Position 517-524 (517-524 (GISGSGKT)) interacts with ATP.

It belongs to the ABC transporter superfamily. Competence factor exporter (TC 3.A.1.112.1) family.

Its subcellular location is the cell membrane. In terms of biological role, required for induction of competence. Seems to transport the competence-stimulating peptide (CSP). The chain is Transport/processing ATP-binding protein ComA (comA) from Streptococcus pneumoniae serotype 4 (strain ATCC BAA-334 / TIGR4).